Reading from the N-terminus, the 451-residue chain is tRNA-2-methylthio-N(6)-dimethylallyladenosine synthase (451 aa).

Residues 11 to 127 (RHYHITTFGC…LEDLLQQVFD (117 aa)) enclose the MTTase N-terminal domain. Cys20, Cys56, Cys90, Cys162, Cys166, and Cys169 together coordinate [4Fe-4S] cluster. Residues 148–385 (RDSTITAWVN…NHLVAQKAAE (238 aa)) enclose the Radical SAM core domain. Residues 388–451 (QRYLGRIEEV…RAFSLTGEIV (64 aa)) form the TRAM domain.

Belongs to the methylthiotransferase family. MiaB subfamily. In terms of assembly, monomer. The cofactor is [4Fe-4S] cluster.

It is found in the cytoplasm. The enzyme catalyses N(6)-dimethylallyladenosine(37) in tRNA + (sulfur carrier)-SH + AH2 + 2 S-adenosyl-L-methionine = 2-methylsulfanyl-N(6)-dimethylallyladenosine(37) in tRNA + (sulfur carrier)-H + 5'-deoxyadenosine + L-methionine + A + S-adenosyl-L-homocysteine + 2 H(+). Functionally, catalyzes the methylthiolation of N6-(dimethylallyl)adenosine (i(6)A), leading to the formation of 2-methylthio-N6-(dimethylallyl)adenosine (ms(2)i(6)A) at position 37 in tRNAs that read codons beginning with uridine. The polypeptide is tRNA-2-methylthio-N(6)-dimethylallyladenosine synthase (Rippkaea orientalis (strain PCC 8801 / RF-1) (Cyanothece sp. (strain PCC 8801))).